The sequence spans 447 residues: MSVLLFGVSHRSAPVSVLEQLSTDESDQAKIVDQVLQSSLVTEAMVLSTCNRVEVYAVVDAFHGGLSVIGQVLAEHCGMSLNDLTKYAYVRYAEAAVEHLFAVASGLDSAVIGEQQVLGQVRRAYTSAEANHTVGRTLHELSQRALSVGKRVHSETGIDAAGASVVSVALDIAEAKLGSLAGRTAVVIGAGSMGALSAKHLVRAGIERVHVVNRSLPRARRLAQSLLDQGVTADAHTLDDIAHALADADVVITSTGAVRPVVSLADAHRGLTGRPEHRRLVICDLGMPRDVEPAIAGLPGVNVIDMERIQREPSARAAASDADAARSIVAAEVANYLAGQRMAEVTPTVTALRQRAADVVEAELLRLDNRLPELDAAHRAEVAKTVRRVVDKLLHAPTVRVKQLASAPGGDSYAEALRELFELDQQAVDAVAAGELPLLPIELDKSE.

Residues 49–52 (TCNR), Ser-109, 114–116 (EQQ), and Gln-120 contribute to the substrate site. Cys-50 acts as the Nucleophile in catalysis. NADP(+) is bound at residue 189–194 (GAGSMG).

The protein belongs to the glutamyl-tRNA reductase family. Homodimer.

It carries out the reaction (S)-4-amino-5-oxopentanoate + tRNA(Glu) + NADP(+) = L-glutamyl-tRNA(Glu) + NADPH + H(+). It functions in the pathway porphyrin-containing compound metabolism; protoporphyrin-IX biosynthesis; 5-aminolevulinate from L-glutamyl-tRNA(Glu): step 1/2. Functionally, catalyzes the NADPH-dependent reduction of glutamyl-tRNA(Glu) to glutamate 1-semialdehyde (GSA). In Mycobacterium sp. (strain JLS), this protein is Glutamyl-tRNA reductase.